Here is a 746-residue protein sequence, read N- to C-terminus: Ferric enterobactin receptor (746 aa).

The N-terminal stretch at 1-25 (MSSRALPAVPFLLLSSCLLANAVHA) is a signal peptide. The TonB box signature appears at 39-44 (QTVVAT). The TBDR plug domain maps to 47–174 (EETKQAPGVS…AGGVVNIITK (128 aa)). Disordered stretches follow at residues 82–102 (VNLT…IDIR), 235–254 (GHES…GREG), and 397–424 (QKLD…KNRS). The segment covering 84–98 (LTGNSSSGQRGNNRQ) has biased composition (polar residues). Residues 179-746 (ETHGNLSVYS…TFYTSLTASF (568 aa)) enclose the TBDR beta-barrel domain. Positions 402–411 (PSSNTQNTEE) are enriched in polar residues. The TonB C-terminal box signature appears at 729–746 (ATYNEPGRTFYTSLTASF).

Belongs to the TonB-dependent receptor family.

Its subcellular location is the cell outer membrane. Specific receptor for the siderophore ferric enterobactin. The polypeptide is Ferric enterobactin receptor (pfeA) (Pseudomonas aeruginosa (strain ATCC 15692 / DSM 22644 / CIP 104116 / JCM 14847 / LMG 12228 / 1C / PRS 101 / PAO1)).